We begin with the raw amino-acid sequence, 111 residues long: Pyrimidine/purine nucleoside phosphorylase 1 (111 aa).

Belongs to the nucleoside phosphorylase PpnP family.

The enzyme catalyses a purine D-ribonucleoside + phosphate = a purine nucleobase + alpha-D-ribose 1-phosphate. It carries out the reaction adenosine + phosphate = alpha-D-ribose 1-phosphate + adenine. The catalysed reaction is cytidine + phosphate = cytosine + alpha-D-ribose 1-phosphate. It catalyses the reaction guanosine + phosphate = alpha-D-ribose 1-phosphate + guanine. The enzyme catalyses inosine + phosphate = alpha-D-ribose 1-phosphate + hypoxanthine. It carries out the reaction thymidine + phosphate = 2-deoxy-alpha-D-ribose 1-phosphate + thymine. The catalysed reaction is uridine + phosphate = alpha-D-ribose 1-phosphate + uracil. It catalyses the reaction xanthosine + phosphate = alpha-D-ribose 1-phosphate + xanthine. In terms of biological role, catalyzes the phosphorolysis of diverse nucleosides, yielding D-ribose 1-phosphate and the respective free bases. Can use uridine, adenosine, guanosine, cytidine, thymidine, inosine and xanthosine as substrates. Also catalyzes the reverse reactions. The protein is Pyrimidine/purine nucleoside phosphorylase 1 of Psychrobacter cryohalolentis (strain ATCC BAA-1226 / DSM 17306 / VKM B-2378 / K5).